The sequence spans 2541 residues: MTFTSHPQSEPLAIIGLACKYANDINSPLDLYQQVMAARSMHGPMPPSRMDAAFYYHPSSEATGTTYAKGGYFLQSDLNAFDSPFFQLSEIDVLAMDPQQKMLLENVYHALENAGIPLKDAVSSSTSVFVGCSNNDHLALANADLLLALKGKGTGTSPSILANRISWFYDFQGTSQTIDTACSSSLVAFHQGCMDVRAGKSTMSIISGVNLMEHPAPTMYLSSLGVLSPDGRSMSFDARANGYGRGEGLGTVIIKPLTAALRDGNRIRAIVRSTGSNQDGRTPGITVPSPTAQERLIREVYKAADLDPSRTGYVEAHGTGTPVGDPLEVQAISAALGMSRDSPLYVGSVKSVVGHLEGGAGMAGLISATMAVESKTIPPVAGLQTLNPRIPQRPDLKFAKEATPWPREDVRRASINSFGFGGTNAHVVLEDVEGFFSDLFGQQLPGALQLSEVTSKALVPSAMKSAVNGIPADQPPKESSVNRLFVISAFDEAGIQRNAASLASHLESMRAITGSDGEERLLNDLCHTLNEKRTRFDWRSYHVADSIDSLRNSLQNPRPIRQSPAEKVVRFIFTGQGANWAGMAYDLLVYPLFRRRIQEAAIFLKELGSDWDLYERIASQSGELDEPTFAQSSCVAVQVALVDLLASWNVTPQTVVGHSSGEIAAAYCAGQISRQAAWKVAFCRGQVCARRTDGQGRMLAAAMPVTQLEQLVARVNKGQSTAVKVGCYNSPKNLTLTGRAEDILRAKLELDDVGALNRLLPVKVAYHSDYMRDAAPEYLDLLGDLDFGDSIHADAGIKMVSSVTGRAVSAGEAQQPSYWVDNLVSPVRFSTALLASMDDPSATGAREDALIEIGPHSTLRTAIKETFADVREFQSIQYGSLLKRYETDGSTILRTFGMLVCSGHKISLAAINDRRVGAKKTPRLLTGLPSYAFDHSRSMRGTSRRIEQAKFPAYKRHELLGVPVEDTNPVEQRWRNILRPDDLPWLRMNRMNGQIHFPGVAYLLMATEAAIQRVGNTVAISGVRLGNVSMLAPLPIPDSAAGVEIQFSIYPMKIHANSGTDWSTFRIVSYDSAEKTWTEHCVGSVRVETGPHESHEPHPGNATREECTESVDIAQMYSRFTTAGMDFGEYLRNIQEMKLSPDHQACTATITAPDIPCQAHDHYSLHPCTFESILHALLHLCKSSQGPMVTTYIEEVLVLSPQDTGVCGFEACAQTQRASATTWRSDVTITANTGRQQIRVTGLDLVQLPPSEDASDAESFYVVKWKPDVKLLTSVDALRDSASMYVAQHLPTLDEHEGFQLASGIFLLDTMDYVTRTGLPALPQHHQAFMQWMEKECRSIADGTVPLLDTALFEGIRASPDRRRELLARVAQLSARGELLVRVGTQMVPILEQKIDCLEVMFGPDNLMDRTYEEGLPGQIAPSVAGYLHCLAHAQTGIKVLEVGAGTGSATKVILDSLKPTERQDGGGLVSSVSTYHFTDISAAFFEKARARFPDWADILRPKVLNIELDPADQGFEMGSYDLVIATHVLHATADLSVSLKNIRGLLKEGGDLIVIENIQPDLMCSPLAFGLLPGWWRSVEPYRKTNPLITKDQWDQELRNAGLQSRLLIDDTDEGVNEMTAFVASRVREPPATQHVCSIIYSSRYGGQYELASQVARDLPPSCTASLVDLADISPEHTSTIGIVLVGYQGLDLSELSAHEYDRVNFLLTAFHRLLWVTCDEDEVPKSAMASGLVRTARWERDHDGVNFILLGISHRVPSASAAVSQMIRVCDHAFFSHELVPRNAEFRLEGSVLLTNRLFPATGINECIASSSRPRSKQVALEAVQHPVKLTSIGPHQPNGFHFVEDPQVDEPLLPDEVKIQIRAVGLDESDVEEMNRLIPGESAGSQGTGVVVEVGPAVHDIHVGDRVMALRTGHSGSLQTVLRTHSSAVTQVPEGLSLADAAAVPLPFTTAYHGLVNVARLEPQDTILIHNAGGATGQAAVQFACMLGATVYATVESDAQRQALLDYGVDRSRLLDGPSFAQQLARRGAKGSVDVLFNLSRESLEDRDLACLSQFGRLVGVHGQGSLPAGPTNRSYATVSIRELVQVRPKALHGTLRTISDLLTSRAIRPITPVRAGYSELQTVLSQIRQGNAGPWVLEPRANDTIPVAMKPLGDYQFDPCASYLLIGGFGGIGRSVVRWMLTRGAKNFIFLSRSGASSVPAKQLCADLLDAGCGVSDTVCDVTDATAVENALQQCGKSMPPIRGCLQCSMVLEDSMLSNMSHAQFLNAITPKVQGTIHVASALSSVKSNLDFFVLLSSSAGIIGNRGQANYSAANAFLDAFAAHLVSRGYPATSISLGSVLSVGWVAENQDRLPIALSYGAISEDLLLAILEYHMDPSWGAAQSPGTCHTVAGVRSARDFQRQSIPLPGFMAYPLFSPLRAIAGASQTAEEVAEAPIAQGLRGATSMEDAVELVTRAIVYKLARIMALSAKEIDAQRSLASYGVDSLVTVDLKAWFQREVGATVASGDLLGDSTIVQLAQQAAGGSRLVSVAMKGTE.

The region spanning 9–431 (SEPLAIIGLA…GTNAHVVLED (423 aa)) is the Ketosynthase family 3 (KS3) domain. Catalysis depends on for beta-ketoacyl synthase activity residues Cys-182, His-317, and His-355. Positions 571-888 (FIFTGQGANW…GSLLKRYETD (318 aa)) constitute a Malonyl-CoA:ACP transacylase (MAT) domain. An N-terminal hotdog fold region spans residues 957–1092 (HELLGVPVED…GSVRVETGPH (136 aa)). The segment at 957–1251 (HELLGVPVED…GLDLVQLPPS (295 aa)) is dehydratase (DH) domain. In terms of domain architecture, PKS/mFAS DH spans 957–1254 (HELLGVPVED…LVQLPPSEDA (298 aa)). A C-terminal hotdog fold region spans residues 1108–1254 (TESVDIAQMY…LVQLPPSEDA (147 aa)). S-adenosyl-L-methionine contacts are provided by Ile-1420 and Glu-1442. Residues 1433–1605 (HAQTGIKVLE…DQELRNAGLQ (173 aa)) form a methyltransferase (CMeT) domain region. The region spanning 1838–2141 (HQPNGFHFVE…RQGNAGPWVL (304 aa)) is the Enoyl reductase (ER) domain. A Ketoreductase (KR) domain is found at 2165 to 2344 (ASYLLIGGFG…PATSISLGSV (180 aa)). Residues 2453–2530 (DAVELVTRAI…QLAQQAAGGS (78 aa)) form the Carrier domain. Ser-2490 carries the post-translational modification O-(pantetheine 4'-phosphoryl)serine.

The cofactor is pantetheine 4'-phosphate.

The enzyme catalyses 4 malonyl-CoA + acetyl-CoA + 5 NADPH + 9 H(+) = 7-methylmellein + 3 CO2 + 5 NADP(+) + 5 CoA + 4 H2O. It participates in mycotoxin biosynthesis. Its function is as follows. Highly reducing polyketide synthase; part of the gene cluster that mediates the biosynthesis of ochratoxin A (OTA), a mycotoxin composed of a chlorinated type I polyketide dihydroisocoumarin moiety linked to L-phenylalanine, and demonstrated to have nephrotoxic, immunotoxic, genotoxic, neurotoxic, and teratogenic properties. OtaA catalyzes the condensation of one acetate and 4 malonate units to form the isocoumarin group. The pathway begins with the highly reducing polyketide synthase otaA that catalyzes the formation of the isocoumarin group during the initial stages of biosynthesis, starting from one acetate and 4 malonate units, to originate the characteristic pentaketide skeleton 7-methylmellein (7-MM) of the OTA molecule. The newly identified cyclase otaY might be involved in the polyketide cyclization reaction during the initial steps of the OTA biosynthesis. 7-MM is then oxidized into 7-carboxymellein (also called ochratoxin beta) by the cytochrome P450 monooxygenase otaC. The NRPS encoded by the otaB gene is involved in the linking of phenylalanine to the dihydroisocoumarin ring. The reaction catalyzed by NRPS results in the production of ochratoxin B (OTB), which is the non-chlorinated analog of OTA and which subsequently serves as the substrate of the halogenase otaD for chlorination activity to form the final molecular structure of OTA, containing a chlorine atom in the C-5 position of the molecule. The chain is Highly reducing polyketide synthase otaA from Aspergillus carbonarius (strain ITEM 5010).